We begin with the raw amino-acid sequence, 188 residues long: Pro-adrenomedullin (188 aa).

A signal peptide spans 1 to 21 (MKLVPVALLYLGSLAFLGADT). Position 41 is an arginine amide (R41). Positions 45–92 (ELRVSSSYPTGLAEVKAGPAQTLIRTQDVKGASRNPQTSGPDAARIRV) are excised as a propeptide. Cysteines 110 and 115 form a disulfide. The segment at 131 to 176 (DKDGVAPRSKISPQGYGRRRRRSLPEPGLRRTLLFPEPRPGGAPAP) is disordered. Y146 bears the Tyrosine amide mark. Residues 153–188 (SLPEPGLRRTLLFPEPRPGGAPAPRAHQVLANLLKM) constitute a propeptide, preproAM C-terminal fragment.

Belongs to the adrenomedullin family.

It localises to the secreted. Adrenomedullin/ADM and proadrenomedullin N-20 terminal peptide/PAMP are peptide hormones that act as potent hypotensive and vasodilatator agents. Numerous actions have been reported most related to the physiologic control of fluid and electrolyte homeostasis. Its function is as follows. ADM function is mediated by the CALCRL-RAMP2 and CALCRL-RAMP3 receptor complexes with ADM showing the highest potency for the CALCRL-RAMP2 complex. The protein is Pro-adrenomedullin (ADM) of Canis lupus familiaris (Dog).